The sequence spans 340 residues: uncharacterized protein (340 aa).

The N-terminal stretch at 1 to 25 (MLGIRAMLVMLDYYWIQLITNNDTR) is a signal peptide. Residues 26–225 (SNNTDTIFVS…RRYMYLFSVS (200 aa)) are Lumenal-facing. Residues asparagine 27, asparagine 54, asparagine 57, asparagine 68, asparagine 72, asparagine 78, asparagine 83, asparagine 107, asparagine 118, asparagine 146, asparagine 173, and asparagine 180 are each glycosylated (N-linked (GlcNAc...) asparagine; by host). A helical transmembrane segment spans residues 226–246 (CAGITGTVSIILVSLSLLILI). Over 247–340 (CYYRCGRLLI…PMHMVVCMPA (94 aa)) the chain is Cytoplasmic.

Belongs to the HHV-5 UL20 protein family.

It is found in the host endoplasmic reticulum membrane. This is an uncharacterized protein from Human cytomegalovirus (strain AD169) (HHV-5).